A 739-amino-acid chain; its full sequence is Polyribonucleotide nucleotidyltransferase (739 aa).

Mg(2+) contacts are provided by aspartate 488 and aspartate 494. The region spanning 555–614 (PKIVTLKINPDKIRDVIGPGGKVINGIIDETGVKIDIDQDGTVFIASTDQDGINHARQLI) is the KH domain. Residues 624-692 (GEEFDGTVRR…DKGRVNASHK (69 aa)) form the S1 motif domain. Positions 698–739 (GMSPEDRAAYDEKKKTERDSRPPRRDTGSRPPRDGQRPPRRN) are disordered. A compositionally biased stretch (basic and acidic residues) spans 701-739 (PEDRAAYDEKKKTERDSRPPRRDTGSRPPRDGQRPPRRN).

This sequence belongs to the polyribonucleotide nucleotidyltransferase family. The cofactor is Mg(2+).

It is found in the cytoplasm. The enzyme catalyses RNA(n+1) + phosphate = RNA(n) + a ribonucleoside 5'-diphosphate. Its function is as follows. Involved in mRNA degradation. Catalyzes the phosphorolysis of single-stranded polyribonucleotides processively in the 3'- to 5'-direction. In Exiguobacterium sibiricum (strain DSM 17290 / CCUG 55495 / CIP 109462 / JCM 13490 / 255-15), this protein is Polyribonucleotide nucleotidyltransferase.